The chain runs to 196 residues: Protein LSM12 homolog A (196 aa).

The region spanning 3–73 (APGPGEYFSV…VSEVDIINDR (71 aa)) is the Sm domain. One can recognise an AD domain in the interval 81–175 (ASLNISKLAN…IVEKHFRDVE (95 aa)). The segment at 174–196 (VESQKTMQRSQAQQTQKDSSLSS) is disordered. Over residues 177 to 196 (QKTMQRSQAQQTQKDSSLSS) the composition is skewed to polar residues.

This sequence belongs to the LSM12 family.

This is Protein LSM12 homolog A (lsm12a) from Danio rerio (Zebrafish).